Consider the following 99-residue polypeptide: Large ribosomal subunit protein uL23 (99 aa).

This sequence belongs to the universal ribosomal protein uL23 family. Part of the 50S ribosomal subunit. Contacts protein L29, and trigger factor when it is bound to the ribosome.

One of the early assembly proteins it binds 23S rRNA. One of the proteins that surrounds the polypeptide exit tunnel on the outside of the ribosome. Forms the main docking site for trigger factor binding to the ribosome. The chain is Large ribosomal subunit protein uL23 from Shewanella sediminis (strain HAW-EB3).